The following is a 180-amino-acid chain: ADP-ribosylation factor 1 (180 aa).

The N-myristoyl glycine moiety is linked to residue glycine 2. GTP is bound by residues 24–31, 67–71, and 126–129; these read GLDAAGKT, DVGGQ, and NKQD.

This sequence belongs to the small GTPase superfamily. Arf family.

It is found in the golgi apparatus. The enzyme catalyses GTP + H2O = GDP + phosphate + H(+). GTP-binding protein involved in protein trafficking; may modulate vesicle budding and uncoating within the Golgi apparatus. The sequence is that of ADP-ribosylation factor 1 (arf1) from Schizosaccharomyces pombe (strain 972 / ATCC 24843) (Fission yeast).